Reading from the N-terminus, the 361-residue chain is Phospho-N-acetylmuramoyl-pentapeptide-transferase (361 aa).

A run of 10 helical transmembrane segments spans residues 28 to 48, 74 to 94, 99 to 119, 133 to 153, 168 to 188, 203 to 223, 236 to 256, 263 to 283, 288 to 308, and 338 to 358; these read LAIIITLSISFVTGPILIKFL, TMGGIMIILSSCLSTLLLADL, IWITLFGFISFGIIGFMDDYA, SKFLLQGIISLIIYVLLEYLD, LSLDLNYFYMVFAIFVIVGSS, VPIAFTAGSFALISYLVGNLI, TGELTVLCAGLVGSCLGFLWF, VFMGDTGSLSLGGVLGIISVI, IVLAIIGGLFVIETTSVILQV, and KVVIRFWIISVIFSLIGLSSL.

This sequence belongs to the glycosyltransferase 4 family. MraY subfamily. Mg(2+) serves as cofactor.

It localises to the cell inner membrane. The catalysed reaction is UDP-N-acetyl-alpha-D-muramoyl-L-alanyl-gamma-D-glutamyl-meso-2,6-diaminopimeloyl-D-alanyl-D-alanine + di-trans,octa-cis-undecaprenyl phosphate = di-trans,octa-cis-undecaprenyl diphospho-N-acetyl-alpha-D-muramoyl-L-alanyl-D-glutamyl-meso-2,6-diaminopimeloyl-D-alanyl-D-alanine + UMP. It functions in the pathway cell wall biogenesis; peptidoglycan biosynthesis. In terms of biological role, catalyzes the initial step of the lipid cycle reactions in the biosynthesis of the cell wall peptidoglycan: transfers peptidoglycan precursor phospho-MurNAc-pentapeptide from UDP-MurNAc-pentapeptide onto the lipid carrier undecaprenyl phosphate, yielding undecaprenyl-pyrophosphoryl-MurNAc-pentapeptide, known as lipid I. The protein is Phospho-N-acetylmuramoyl-pentapeptide-transferase of Rickettsia prowazekii (strain Madrid E).